A 904-amino-acid polypeptide reads, in one-letter code: Protein translocase subunit SecA (904 aa).

ATP-binding positions include Gln87, 105-109, and Asp512; that span reads GEGKT. Positions 851–904 are disordered; that stretch reads LAKQQQLSHESDNSALMSQEEANVAASLERKVGRNDPCPCGSGKKYKQCHGRLQ. Over residues 853-871 the composition is skewed to polar residues; the sequence is KQQQLSHESDNSALMSQEE. Zn(2+) is bound by residues Cys888, Cys890, Cys899, and His900. Positions 894–904 are enriched in basic residues; it reads KKYKQCHGRLQ.

This sequence belongs to the SecA family. As to quaternary structure, monomer and homodimer. Part of the essential Sec protein translocation apparatus which comprises SecA, SecYEG and auxiliary proteins SecDF-YajC and YidC. Zn(2+) is required as a cofactor.

It is found in the cell inner membrane. It localises to the cytoplasm. The enzyme catalyses ATP + H2O + cellular proteinSide 1 = ADP + phosphate + cellular proteinSide 2.. Its function is as follows. Part of the Sec protein translocase complex. Interacts with the SecYEG preprotein conducting channel. Has a central role in coupling the hydrolysis of ATP to the transfer of proteins into and across the cell membrane, serving both as a receptor for the preprotein-SecB complex and as an ATP-driven molecular motor driving the stepwise translocation of polypeptide chains across the membrane. This chain is Protein translocase subunit SecA, found in Yersinia enterocolitica serotype O:8 / biotype 1B (strain NCTC 13174 / 8081).